The sequence spans 142 residues: Large ribosomal subunit protein uL11 (142 aa).

It belongs to the universal ribosomal protein uL11 family. As to quaternary structure, part of the ribosomal stalk of the 50S ribosomal subunit. Interacts with L10 and the large rRNA to form the base of the stalk. L10 forms an elongated spine to which L12 dimers bind in a sequential fashion forming a multimeric L10(L12)X complex. Post-translationally, one or more lysine residues are methylated.

Forms part of the ribosomal stalk which helps the ribosome interact with GTP-bound translation factors. The protein is Large ribosomal subunit protein uL11 of Pseudoalteromonas translucida (strain TAC 125).